The chain runs to 622 residues: Polygalacturonase 1 beta-like protein 1 (622 aa).

The N-terminal stretch at 1-21 is a signal peptide; the sequence is MRKQFVFLLPFLSRLYHVVIA. Residues 118–121 form an FXXY 1 repeat; the sequence is FSVY. Asn125 carries N-linked (GlcNAc...) asparagine glycosylation. 11 FXXY repeats span residues 126–129, 140–143, 154–157, 168–171, 182–185, 196–199, 210–213, 224–227, 239–242, 253–256, and 267–270; these read FTNY, FKKY, FRRY, FTGY, FNSY, FKNY, FKAY, FKTY, FTSY, FSSY, and FSNY. A glycan (N-linked (GlcNAc...) asparagine) is linked at Asn278. 7 FXXY repeats span residues 281-284, 295-298, 309-312, 323-326, 337-340, 351-354, and 365-368; these read FKGY, FKSY, FLNY, FSSY, FVNY, FSGY, and FKTY. N-linked (GlcNAc...) asparagine glycosylation is present at Asn371. 2 FXXY repeats span residues 374–377 and 384–387; these read FKDY and FAKY. N-linked (GlcNAc...) asparagine glycosylation is found at Asn388 and Asn461. One can recognise a BURP domain in the interval 407 to 621; it reads FFRESMLKEG…FENDMNWAIA (215 aa).

In terms of tissue distribution, expressed in flowers and stems.

The protein localises to the secreted. It localises to the extracellular space. The protein resides in the apoplast. It is found in the cell wall. In terms of biological role, involved in cell size determination. The sequence is that of Polygalacturonase 1 beta-like protein 1 from Arabidopsis thaliana (Mouse-ear cress).